The sequence spans 38 residues: Large ribosomal subunit protein bL36 (38 aa).

This sequence belongs to the bacterial ribosomal protein bL36 family.

The sequence is that of Large ribosomal subunit protein bL36 from Proteus mirabilis (strain HI4320).